Reading from the N-terminus, the 155-residue chain is Ribosome maturation factor RimP (155 aa).

The protein belongs to the RimP family.

Its subcellular location is the cytoplasm. In terms of biological role, required for maturation of 30S ribosomal subunits. The chain is Ribosome maturation factor RimP from Staphylococcus aureus (strain bovine RF122 / ET3-1).